The sequence spans 156 residues: Probable low-salt glycan biosynthesis epimerase Agl13 (156 aa).

Substrate contacts are provided by residues Arg19, Glu24, 39–41 (MSY), Arg51, His54, and His109.

It belongs to the dTDP-4-dehydrorhamnose 3,5-epimerase family.

Its pathway is protein modification; protein glycosylation. It functions in the pathway cell surface structure biogenesis; S-layer biogenesis. In terms of biological role, epimerase involved in N-glycan biosynthetic pathway that takes place under low-salt conditions (1.75 M instead of 3.4 M). Participates in the formation of the tetrasaccharide present at 'Asn-532' of S-layer glycoprotein Csg, consisting of a sulfated hexose, 2 hexoses and rhamnose. Involved in the addition of final rhamnose (sugar 4) of the tetrasaccharide on the dolichol phosphate carrier. This chain is Probable low-salt glycan biosynthesis epimerase Agl13 (agl13), found in Haloferax volcanii (strain ATCC 29605 / DSM 3757 / JCM 8879 / NBRC 14742 / NCIMB 2012 / VKM B-1768 / DS2) (Halobacterium volcanii).